The primary structure comprises 402 residues: MEQKISVALKEIKRGANEIIGLEYIEKLVRKYYETNERFIVKAGFDPTAPDLHLGHTVLIQKLALLQQYGARVKFLIGDFTAMIGDPTGKNETRKPLNREQVLENAKTYKEQIYKILDQKHTEVCFNSAWLDALGAKGMIELCAKFSVARMLERDDFAKRYKENRPISIVEFLYPLLQGYDSVAMGADIELGGNDQKFNLLVGRFLQRAYGLNKEQSIITMPLLEGLDGVQKMSKSLGNYVGITEEPNAMFGKIMSVSDDLMWRYYTLLSAKTLEEIEDLKHGILHQTLHPKAVKEDLASEIVARYYDNDQAFKAKEQFSKVFSANLLPEILLESDFDEGVGVLDVLKQIGFCPSTSQARRDIQGGGVKINQEVVKDESYRFVKGNYVIQLGKKRFMKLNIN.

A 'HIGH' region motif is present at residues 47 to 56; sequence PTAPDLHLGH. The short motif at 232–236 is the 'KMSKS' region element; it reads KMSKS. Lys-235 contacts ATP. The 61-residue stretch at 341 to 401 folds into the S4 RNA-binding domain; that stretch reads VGVLDVLKQI…GKKRFMKLNI (61 aa).

It belongs to the class-I aminoacyl-tRNA synthetase family. TyrS type 2 subfamily. As to quaternary structure, homodimer.

The protein resides in the cytoplasm. It catalyses the reaction tRNA(Tyr) + L-tyrosine + ATP = L-tyrosyl-tRNA(Tyr) + AMP + diphosphate + H(+). Functionally, catalyzes the attachment of tyrosine to tRNA(Tyr) in a two-step reaction: tyrosine is first activated by ATP to form Tyr-AMP and then transferred to the acceptor end of tRNA(Tyr). This is Tyrosine--tRNA ligase from Helicobacter pylori (strain J99 / ATCC 700824) (Campylobacter pylori J99).